Here is a 497-residue protein sequence, read N- to C-terminus: Probable malate:quinone oxidoreductase (497 aa).

The protein belongs to the MQO family. FAD is required as a cofactor.

The catalysed reaction is (S)-malate + a quinone = a quinol + oxaloacetate. It participates in carbohydrate metabolism; tricarboxylic acid cycle; oxaloacetate from (S)-malate (quinone route): step 1/1. The polypeptide is Probable malate:quinone oxidoreductase (Exiguobacterium sibiricum (strain DSM 17290 / CCUG 55495 / CIP 109462 / JCM 13490 / 255-15)).